Reading from the N-terminus, the 132-residue chain is Large ribosomal subunit protein uL14 (132 aa).

This sequence belongs to the universal ribosomal protein uL14 family. As to quaternary structure, part of the 50S ribosomal subunit. Forms a cluster with proteins L3 and L24e, part of which may contact the 16S rRNA in 2 intersubunit bridges.

Its function is as follows. Binds to 23S rRNA. Forms part of two intersubunit bridges in the 70S ribosome. In Methanococcus maripaludis (strain C7 / ATCC BAA-1331), this protein is Large ribosomal subunit protein uL14.